The following is a 284-amino-acid chain: T-cell leukemia homeobox protein 2 (284 aa).

Disordered stretches follow at residues 1–50, 78–106, and 139–166; these read MEPG…NGAF, GGVI…GPSG, and FSGT…SFSR. A compositionally biased stretch (gly residues) spans 30-50; sequence TPGGGLGLGRGGQGHGENGAF. Residues 87-96 show a composition bias toward pro residues; it reads RPLPVPPPAG. The homeobox DNA-binding region spans 157-216; the sequence is RKKPRTSFSRSQVLELERRFLRQKYLASAERAALAKALRMTDAQVKTWFQNRRTKWRRQT.

The protein resides in the nucleus. Its function is as follows. Transcription activator that binds DNA elements with the consensus sequence 5'-CGGTAATTGG-3'. Binds DNA via its homeobox. Required for normal cell death of enteric neurons in the gastrointestinal tract. Required for normal development of the enteric nervous system, and for proper development of normal motility of the gastrointestinal tract. This Homo sapiens (Human) protein is T-cell leukemia homeobox protein 2 (TLX2).